An 85-amino-acid chain; its full sequence is Small ribosomal subunit protein bS16 (85 aa).

Belongs to the bacterial ribosomal protein bS16 family.

In Xanthomonas oryzae pv. oryzae (strain PXO99A), this protein is Small ribosomal subunit protein bS16.